The chain runs to 121 residues: Large ribosomal subunit protein bL20 (121 aa).

Belongs to the bacterial ribosomal protein bL20 family.

Functionally, binds directly to 23S ribosomal RNA and is necessary for the in vitro assembly process of the 50S ribosomal subunit. It is not involved in the protein synthesizing functions of that subunit. This is Large ribosomal subunit protein bL20 from Roseobacter denitrificans (strain ATCC 33942 / OCh 114) (Erythrobacter sp. (strain OCh 114)).